Reading from the N-terminus, the 432-residue chain is Enolase (432 aa).

Q167 serves as a coordination point for (2R)-2-phosphoglycerate. E209 serves as the catalytic Proton donor. The Mg(2+) site is built by D246, E290, and D317. Residues K342, R371, S372, and K393 each contribute to the (2R)-2-phosphoglycerate site. K342 acts as the Proton acceptor in catalysis.

Belongs to the enolase family. As to quaternary structure, component of the RNA degradosome, a multiprotein complex involved in RNA processing and mRNA degradation. Mg(2+) serves as cofactor.

The protein localises to the cytoplasm. It localises to the secreted. Its subcellular location is the cell surface. The enzyme catalyses (2R)-2-phosphoglycerate = phosphoenolpyruvate + H2O. It participates in carbohydrate degradation; glycolysis; pyruvate from D-glyceraldehyde 3-phosphate: step 4/5. Its function is as follows. Catalyzes the reversible conversion of 2-phosphoglycerate (2-PG) into phosphoenolpyruvate (PEP). It is essential for the degradation of carbohydrates via glycolysis. The protein is Enolase of Salmonella dublin (strain CT_02021853).